The following is a 228-amino-acid chain: Small ribosomal subunit protein uS3 (228 aa).

Residues 39 to 107 (VREFIRERLK…PVHINIEEIR (69 aa)) form the KH type-2 domain.

This sequence belongs to the universal ribosomal protein uS3 family. As to quaternary structure, part of the 30S ribosomal subunit. Forms a tight complex with proteins S10 and S14.

Its function is as follows. Binds the lower part of the 30S subunit head. Binds mRNA in the 70S ribosome, positioning it for translation. This Halorhodospira halophila (strain DSM 244 / SL1) (Ectothiorhodospira halophila (strain DSM 244 / SL1)) protein is Small ribosomal subunit protein uS3.